Reading from the N-terminus, the 1047-residue chain is Ribonucleoside-diphosphate reductase subunit alpha (1047 aa).

3 ATP-cone domains span residues 9–111 (CTIV…KAHR), 118–219 (LSVI…ARVR), and 237–327 (FEVL…EALD). Residues Thr-442, 457-458 (SC), Gly-486, 670-674 (NLCTE), and 857-861 (PTATI) each bind substrate. A disulfide bridge connects residues Cys-458 and Cys-687. The active-site Proton acceptor is Asn-670. Cys-672 acts as the Cysteine radical intermediate in catalysis. Catalysis depends on Glu-674, which acts as the Proton acceptor.

The protein belongs to the ribonucleoside diphosphate reductase large chain family. In terms of assembly, tetramer of two alpha and two beta subunits.

The catalysed reaction is a 2'-deoxyribonucleoside 5'-diphosphate + [thioredoxin]-disulfide + H2O = a ribonucleoside 5'-diphosphate + [thioredoxin]-dithiol. With respect to regulation, under complex allosteric control mediated by deoxynucleoside triphosphates and ATP binding. The type of nucleotide bound at the specificity site determines substrate preference. It seems probable that ATP makes the enzyme reduce CDP and UDP, dGTP favors ADP reduction and dTTP favors GDP reduction. Provides the precursors necessary for DNA synthesis. Catalyzes the biosynthesis of deoxyribonucleotides from the corresponding ribonucleotides. The chain is Ribonucleoside-diphosphate reductase subunit alpha (nrdA) from Chlamydia muridarum (strain MoPn / Nigg).